The primary structure comprises 176 residues: R-phycoerythrin beta chain (176 aa).

Residues C50 and C61 each coordinate phycourobilin. N72 is subject to N4-methylasparagine. C82 and C158 together coordinate (2R,3E)-phycoerythrobilin.

This sequence belongs to the phycobiliprotein family. Heterodimer of an alpha and a beta chain. Contains two covalently linked phycoerythrobilin chromophores and one covalently linked phycourobilin chromophore.

The protein resides in the plastid. Its subcellular location is the chloroplast thylakoid membrane. Light-harvesting photosynthetic bile pigment-protein from the phycobiliprotein complex. The chain is R-phycoerythrin beta chain (cpeB) from Aglaothamnion neglectum (Red alga).